The sequence spans 254 residues: Vesicle transport protein USE1 (254 aa).

Topologically, residues 1–228 are cytoplasmic; the sequence is MAYISENELK…AYKCGYDCFK (228 aa). Residues 229 to 249 form a helical; Anchor for type IV membrane protein membrane-spanning segment; it reads VMLIVLIFMSFVSMVLMMKIF. The Lumenal segment spans residues 250–254; the sequence is KKAST.

This sequence belongs to the USE1 family.

It localises to the endoplasmic reticulum membrane. SNARE that may be involved in targeting and fusion of Golgi-derived retrograde transport vesicles with the ER. This chain is Vesicle transport protein USE1, found in Caenorhabditis elegans.